The sequence spans 430 residues: 3-deoxy-D-manno-octulosonic acid transferase (430 aa).

A helical; Signal-anchor membrane pass occupies residues A12–H32. Catalysis depends on E66, which acts as the Proton acceptor. CMP is bound by residues P274–R275, M314–I316, and N341–E344.

The protein belongs to the glycosyltransferase group 1 family. Glycosyltransferase 30 subfamily.

The protein localises to the cell inner membrane. It carries out the reaction lipid IVA (E. coli) + CMP-3-deoxy-beta-D-manno-octulosonate = alpha-Kdo-(2-&gt;6)-lipid IVA (E. coli) + CMP + H(+). The catalysed reaction is alpha-Kdo-(2-&gt;6)-lipid IVA (E. coli) + CMP-3-deoxy-beta-D-manno-octulosonate = alpha-Kdo-(2-&gt;4)-alpha-Kdo-(2-&gt;6)-lipid IVA (E. coli) + CMP + H(+). It catalyses the reaction alpha-Kdo-(2-&gt;4)-alpha-Kdo-(2-&gt;6)-lipid IVA (E. coli) + CMP-3-deoxy-beta-D-manno-octulosonate = alpha-Kdo-(2-&gt;8)-alpha-Kdo-(2-&gt;4)-alpha-Kdo-(2-&gt;6)-lipid IVA (E. coli) + CMP + H(+). It functions in the pathway bacterial outer membrane biogenesis; LPS core biosynthesis. Its function is as follows. Involved in lipopolysaccharide (LPS) biosynthesis. Catalyzes the transfer of three 3-deoxy-D-manno-octulosonate (Kdo) residues from CMP-Kdo to lipid IV(A), the tetraacyldisaccharide-1,4'-bisphosphate precursor of lipid A. Thus generates the genus-specific LPS epitope of Chlamydia, composed of the trisaccharide alpha-Kdo-(2-&gt;8)-alpha-Kdo-(2-&gt;4)-alpha-Kdo. This chain is 3-deoxy-D-manno-octulosonic acid transferase (waaA), found in Chlamydia muridarum (strain MoPn / Nigg).